Here is an 86-residue protein sequence, read N- to C-terminus: Small ribosomal subunit protein bS20 (86 aa).

It belongs to the bacterial ribosomal protein bS20 family.

Functionally, binds directly to 16S ribosomal RNA. In Buchnera aphidicola subsp. Cinara cedri (strain Cc), this protein is Small ribosomal subunit protein bS20.